The following is a 2206-amino-acid chain: Genome polyprotein (2206 aa).

Residue Gly-2 is the site of N-myristoyl glycine; by host attachment. The Cytoplasmic segment spans residues 2-1517 (GAQVSSQKVG…NINRAMTILQ (1516 aa)). Amphipathic alpha-helix regions lie at residues 579 to 599 (GVDDLITEVAQNALALSLPKP) and 579 to 603 (GVDDLITEVAQNALALSLPKPQSNL). Catalysis depends on for protease 2A activity residues His-898 and Asp-916. Residues Cys-933 and Cys-935 each coordinate Zn(2+). The For protease 2A activity role is filled by Cys-987. Zn(2+) is bound by residues Cys-993 and His-995. The interval 1125-1197 (GDSWLKKFTE…HQSCPSQEHQ (73 aa)) is membrane-binding. The interval 1125–1263 (GDSWLKKFTE…SPGTGKSVAT (139 aa)) is oligomerization. Positions 1146-1150 (SNKIS) are RNA-binding. The region spanning 1229–1385 (EHTINNYIQF…SEYSRDGKLN (157 aa)) is the SF3 helicase domain. An ATP-binding site is contributed by 1253–1260 (GSPGTGKS). Residues Cys-1393, Cys-1396, Cys-1405, and Cys-1410 each contribute to the Zn(2+) site. The C4-type zinc finger occupies 1393-1410 (CKNCHQPANFKRCCPLVC). Positions 1437–1444 (EKNRRSNI) are RNA-binding. The segment at 1448–1453 (MEALFQ) is oligomerization. An intramembrane segment occupies 1518 to 1533 (AVTTFAAVAGVVYVMY). The Cytoplasmic segment spans residues 1534–2206 (KLFAGHQGAY…TLYRRWLDSF (673 aa)). Position 1543 is an O-(5'-phospho-RNA)-tyrosine (Tyr-1543). Residues 1563–1741 (GPGFDYAVAM…FAAALKRSYF (179 aa)) enclose the Peptidase C3 domain. Residues His-1602, Glu-1633, and Cys-1709 each act as for protease 3C activity in the active site. A RdRp catalytic domain is found at 1972–2087 (EKLFAFDYTG…SYPHEVDASL (116 aa)). Residues Asp-1978 and Asp-2073 each coordinate Mg(2+).

The protein belongs to the picornaviruses polyprotein family. Interacts with capsid protein VP1 and capsid protein VP3 to form heterotrimeric protomers. As to quaternary structure, interacts with capsid protein VP0, and capsid protein VP3 to form heterotrimeric protomers. Interacts with human PVR. Five protomers subsequently associate to form pentamers which serve as building blocks for the capsid. Interacts with capsid protein VP2, capsid protein VP3 and capsid protein VP4 following cleavage of capsid protein VP0. In terms of assembly, interacts with capsid protein VP1 and capsid protein VP3 in the mature capsid. Interacts with capsid protein VP0 and capsid protein VP1 to form heterotrimeric protomers. Five protomers subsequently associate to form pentamers which serve as building blocks for the capsid. Interacts with capsid protein VP4 in the mature capsid. Interacts with protein 2C; this interaction may be important for virion morphogenesis. As to quaternary structure, interacts with capsid protein VP1 and capsid protein VP3. In terms of assembly, homodimer. Homohexamer; forms a hexameric ring structure with 6-fold symmetry characteristic of AAA+ ATPases. Interacts (via N-terminus) with host RTN3 (via reticulon domain); this interaction is important for viral replication. Interacts with capsid protein VP3; this interaction may be important for virion morphogenesis. As to quaternary structure, interacts with protein 3CD. In terms of assembly, homodimer. Interacts with host GBF1. Interacts (via GOLD domain) with host ACBD3 (via GOLD domain); this interaction allows the formation of a viral protein 3A/ACBD3 heterotetramer with a 2:2 stoichiometry, which will stimulate the recruitment of host PI4KB in order to synthesize PI4P at the viral RNA replication sites. Interacts with RNA-directed RNA polymerase. As to quaternary structure, interacts with protein 3AB and with RNA-directed RNA polymerase. In terms of assembly, interacts with Viral protein genome-linked and with protein 3CD. Requires Mg(2+) as cofactor. Specific enzymatic cleavages in vivo by the viral proteases yield processing intermediates and the mature proteins. In terms of processing, myristoylation is required for the formation of pentamers during virus assembly. Further assembly of 12 pentamers and a molecule of genomic RNA generates the provirion. Post-translationally, during virion maturation, immature virions are rendered infectious following cleavage of VP0 into VP4 and VP2. This maturation seems to be an autocatalytic event triggered by the presence of RNA in the capsid and it is followed by a conformational change infectious virion. Myristoylation is required during RNA encapsidation and formation of the mature virus particle. In terms of processing, VPg is uridylylated by the polymerase into VPg-pUpU. This acts as a nucleotide-peptide primer for the genomic RNA replication.

It localises to the virion. Its subcellular location is the host cytoplasm. It is found in the host cytoplasmic vesicle membrane. The protein localises to the host nucleus. It catalyses the reaction a ribonucleoside 5'-triphosphate + H2O = a ribonucleoside 5'-diphosphate + phosphate + H(+). The catalysed reaction is Selective cleavage of Tyr-|-Gly bond in the picornavirus polyprotein.. The enzyme catalyses RNA(n) + a ribonucleoside 5'-triphosphate = RNA(n+1) + diphosphate. It carries out the reaction Selective cleavage of Gln-|-Gly bond in the poliovirus polyprotein. In other picornavirus reactions Glu may be substituted for Gln, and Ser or Thr for Gly.. With respect to regulation, replication or transcription is subject to high level of random mutations by the nucleotide analog ribavirin. Its function is as follows. Forms an icosahedral capsid of pseudo T=3 symmetry with capsid proteins VP2 and VP3. The capsid is 300 Angstroms in diameter, composed of 60 copies of each capsid protein and enclosing the viral positive strand RNA genome. Capsid protein VP1 mainly forms the vertices of the capsid. Capsid protein VP1 interacts with host cell receptor PVR to provide virion attachment to target host cells. This attachment induces virion internalization predominantly through clathrin- and caveolin-independent endocytosis in Hela cells and through caveolin-mediated endocytosis in brain microvascular endothelial cells. Tyrosine kinases are probably involved in the entry process. Virus binding to PVR induces increased junctional permeability and rearrangement of junctional proteins. Modulation of endothelial tight junctions, as well as cytolytic infection of endothelial cells themselves, may result in loss of endothelial integrity which may help the virus to reach the CNS. After binding to its receptor, the capsid undergoes conformational changes. Capsid protein VP1 N-terminus (that contains an amphipathic alpha-helix) and capsid protein VP4 are externalized. Together, they shape a pore in the host membrane through which viral genome is translocated to host cell cytoplasm. In terms of biological role, forms an icosahedral capsid of pseudo T=3 symmetry with capsid proteins VP2 and VP3. The capsid is 300 Angstroms in diameter, composed of 60 copies of each capsid protein and enclosing the viral positive strand RNA genome. Lies on the inner surface of the capsid shell. After binding to the host receptor, the capsid undergoes conformational changes. Capsid protein VP4 is released, Capsid protein VP1 N-terminus is externalized, and together, they shape a pore in the host membrane through which the viral genome is translocated into the host cell cytoplasm. Functionally, component of immature procapsids, which is cleaved into capsid proteins VP4 and VP2 after maturation. Allows the capsid to remain inactive before the maturation step. Its function is as follows. Cysteine protease that cleaves viral polyprotein and specific host proteins. It is responsible for the autocatalytic cleavage between the P1 and P2 regions, which is the first cleavage occurring in the polyprotein. Also cleaves the host translation initiation factor EIF4G1, in order to shut down the capped cellular mRNA translation. Inhibits the host nucleus-cytoplasm protein and RNA trafficking by cleaving host members of the nuclear pores including NUP98, NUP62 and NUP153. Counteracts stress granule formation probably by antagonizing its assembly or promoting its dissassembly. Cleaves and inhibits host IFIH1/MDA5, thereby inhibiting the type-I IFN production and the establishment of the antiviral state. Cleaves and inhibits host MAVS, thereby inhibiting the type-I IFN production and the establishment of the antiviral state. In terms of biological role, plays an essential role in the virus replication cycle by acting as a viroporin. Creates a pore in the host endoplasmic reticulum and as a consequence releases Ca2+ in the cytoplasm of infected cell. In turn, high levels of cytoplasmic calcium may trigger membrane trafficking and transport of viral ER-associated proteins to viroplasms, sites of viral genome replication. Induces and associates with structural rearrangements of intracellular membranes. Displays RNA-binding, nucleotide binding and NTPase activities. May play a role in virion morphogenesis and viral RNA encapsidation by interacting with the capsid protein VP3. Functionally, localizes the viral replication complex to the surface of membranous vesicles. Together with protein 3CD binds the Cis-Active RNA Element (CRE) which is involved in RNA synthesis initiation. Acts as a cofactor to stimulate the activity of 3D polymerase, maybe through a nucleid acid chaperone activity. Its function is as follows. Localizes the viral replication complex to the surface of membranous vesicles. It inhibits host cell endoplasmic reticulum-to-Golgi apparatus transport and causes the disassembly of the Golgi complex, possibly through GBF1 interaction. This would result in depletion of MHC, trail receptors and IFN receptors at the host cell surface. Plays an essential role in viral RNA replication by recruiting ACBD3 and PI4KB at the viral replication sites, thereby allowing the formation of the rearranged membranous structures where viral replication takes place. In terms of biological role, acts as a primer for viral RNA replication and remains covalently bound to viral genomic RNA. VPg is uridylylated prior to priming replication into VPg-pUpU. The oriI viral genomic sequence may act as a template for this. The VPg-pUpU is then used as primer on the genomic RNA poly(A) by the RNA-dependent RNA polymerase to replicate the viral genome. During genome replication, the VPg-RNA linkage is removed by the host TDP2, thereby accelerating replication. During the late stage of the replication cycle, host TDP2 is excluded from sites of viral RNA synthesis and encapsidation, allowing for the generation of progeny virions. Involved in the viral replication complex and viral polypeptide maturation. It exhibits protease activity with a specificity and catalytic efficiency that is different from protease 3C. Protein 3CD lacks polymerase activity. Protein 3CD binds to the 5'UTR of the viral genome. Functionally, major viral protease that mediates proteolytic processing of the polyprotein. Cleaves host EIF5B, contributing to host translation shutoff. Also cleaves host PABPC1, contributing to host translation shutoff. Cleaves host RIGI and thus contributes to the inhibition of type I interferon production. Cleaves host NLRP1, triggers host N-glycine-mediated degradation of the autoinhibitory NLRP1 N-terminal fragment. Inhibits the integrated stress response (ISR) in the infected cell by cleaving host G3BP1. Stress granule formation is thus inhibited, which allows protein synthesis and viral replication. Its function is as follows. Replicates the viral genomic RNA on the surface of intracellular membranes. May form linear arrays of subunits that propagate along a strong head-to-tail interaction called interface-I. Covalently attaches UMP to a tyrosine of VPg, which is used to prime RNA synthesis. The positive stranded RNA genome is first replicated at virus induced membranous vesicles, creating a dsRNA genomic replication form. This dsRNA is then used as template to synthesize positive stranded RNA genomes. ss(+)RNA genomes are either translated, replicated or encapsidated. The protein is Genome polyprotein of Poliovirus type 3 (strain 23127).